The primary structure comprises 295 residues: GTP cyclohydrolase FolE2 (295 aa).

Belongs to the GTP cyclohydrolase IV family.

It carries out the reaction GTP + H2O = 7,8-dihydroneopterin 3'-triphosphate + formate + H(+). It functions in the pathway cofactor biosynthesis; 7,8-dihydroneopterin triphosphate biosynthesis; 7,8-dihydroneopterin triphosphate from GTP: step 1/1. Its function is as follows. Converts GTP to 7,8-dihydroneopterin triphosphate. The sequence is that of GTP cyclohydrolase FolE2 from Pseudomonas putida (strain W619).